We begin with the raw amino-acid sequence, 659 residues long: A-type ATP synthase subunit I (659 aa).

8 consecutive transmembrane segments (helical) span residues 376 to 396 (FFFG…VISA), 415 to 435 (IMLW…SYCG), 460 to 480 (VMAL…GFIV), 489 to 509 (AAIL…LFAL), 513 to 533 (LGIP…LFVV), 542 to 562 (MAVL…LSYA), 566 to 586 (ALAL…NMVW), and 590 to 610 (IGPI…GHIF).

This sequence belongs to the V-ATPase 116 kDa subunit family. Has multiple subunits with at least A(3), B(3), C, D, E, F, H, I and proteolipid K(x).

The protein resides in the cell membrane. Component of the A-type ATP synthase that produces ATP from ADP in the presence of a proton gradient across the membrane. The chain is A-type ATP synthase subunit I from Pyrococcus abyssi (strain GE5 / Orsay).